A 293-amino-acid polypeptide reads, in one-letter code: ATP synthase subunit a (293 aa).

The next 6 helical transmembrane spans lie at 40–60 (DSLF…WLAA), 97–117 (LFVA…NALD), 151–171 (DLNV…YYGI), 188–208 (FHAH…LNLI), 225–245 (MFAG…WTGF), and 264–284 (AIFH…LTLV).

Belongs to the ATPase A chain family. F-type ATPases have 2 components, CF(1) - the catalytic core - and CF(0) - the membrane proton channel. CF(1) has five subunits: alpha(3), beta(3), gamma(1), delta(1), epsilon(1). CF(0) has three main subunits: a(1), b(2) and c(9-12). The alpha and beta chains form an alternating ring which encloses part of the gamma chain. CF(1) is attached to CF(0) by a central stalk formed by the gamma and epsilon chains, while a peripheral stalk is formed by the delta and b chains.

The protein resides in the cell inner membrane. In terms of biological role, key component of the proton channel; it plays a direct role in the translocation of protons across the membrane. The chain is ATP synthase subunit a from Bordetella bronchiseptica (strain ATCC BAA-588 / NCTC 13252 / RB50) (Alcaligenes bronchisepticus).